Consider the following 496-residue polypeptide: Probable diguanylate cyclase DgcJ (496 aa).

Helical transmembrane passes span 11–31 (FIAASVIVLTSSFLIFELVAS) and 305–325 (ILYFITSSWKSVLFWILTALI). The region spanning 374-496 (SSVMFIAIDM…VNKQNKNSRS (123 aa)) is the GGDEF domain. Asp-382 is a binding site for Mg(2+). Positions 390, 395, and 399 each coordinate substrate. Asp-425 serves as a coordination point for Mg(2+). Asp-425 (proton acceptor) is an active-site residue.

Homodimer. Mg(2+) serves as cofactor.

The protein resides in the cell inner membrane. The catalysed reaction is 2 GTP = 3',3'-c-di-GMP + 2 diphosphate. Its pathway is purine metabolism; 3',5'-cyclic di-GMP biosynthesis. Its function is as follows. Catalyzes the synthesis of cyclic-di-GMP (c-di-GMP) via the condensation of 2 GTP molecules. This is Probable diguanylate cyclase DgcJ from Escherichia coli (strain K12).